Consider the following 131-residue polypeptide: Large ribosomal subunit protein bL17 (131 aa).

This sequence belongs to the bacterial ribosomal protein bL17 family. Part of the 50S ribosomal subunit. Contacts protein L32.

In Chromobacterium violaceum (strain ATCC 12472 / DSM 30191 / JCM 1249 / CCUG 213 / NBRC 12614 / NCIMB 9131 / NCTC 9757 / MK), this protein is Large ribosomal subunit protein bL17.